We begin with the raw amino-acid sequence, 469 residues long: 3-isopropylmalate dehydratase large subunit (469 aa).

[4Fe-4S] cluster-binding residues include C349, C409, and C412. The interval 424–443 is disordered; it reads QISASSSNRNFKGRQGSPSG.

This sequence belongs to the aconitase/IPM isomerase family. LeuC type 1 subfamily. In terms of assembly, heterodimer of LeuC and LeuD. [4Fe-4S] cluster is required as a cofactor.

It carries out the reaction (2R,3S)-3-isopropylmalate = (2S)-2-isopropylmalate. The protein operates within amino-acid biosynthesis; L-leucine biosynthesis; L-leucine from 3-methyl-2-oxobutanoate: step 2/4. Its function is as follows. Catalyzes the isomerization between 2-isopropylmalate and 3-isopropylmalate, via the formation of 2-isopropylmaleate. This chain is 3-isopropylmalate dehydratase large subunit, found in Thermosynechococcus vestitus (strain NIES-2133 / IAM M-273 / BP-1).